Here is a 197-residue protein sequence, read N- to C-terminus: Protein-methionine-sulfoxide reductase heme-binding subunit MsrQ (197 aa).

The next 6 helical transmembrane spans lie at 10-30, 42-62, 75-95, 110-130, 147-167, and 169-189; these read IFIVGCLFPVWWLYEAAMNLL, LGLGALTFLLVTLSMTPLQKL, LGLWVFAYIVLHILCYLFFIL, PYIIVGALGFLGLLVLAVTSN, LVYAVLGLGLLHFLWIVRSDL, and EWAIYAFIGAVLMVLRIPAVA.

The protein belongs to the MsrQ family. As to quaternary structure, heterodimer of a catalytic subunit (MsrP) and a heme-binding subunit (MsrQ). FMN serves as cofactor. It depends on heme b as a cofactor.

It localises to the cell inner membrane. Its function is as follows. Part of the MsrPQ system that repairs oxidized periplasmic proteins containing methionine sulfoxide residues (Met-O), using respiratory chain electrons. Thus protects these proteins from oxidative-stress damage caused by reactive species of oxygen and chlorine generated by the host defense mechanisms. MsrPQ is essential for the maintenance of envelope integrity under bleach stress, rescuing a wide series of structurally unrelated periplasmic proteins from methionine oxidation. MsrQ provides electrons for reduction to the reductase catalytic subunit MsrP, using the quinone pool of the respiratory chain. This is Protein-methionine-sulfoxide reductase heme-binding subunit MsrQ from Pseudomonas putida (strain ATCC 47054 / DSM 6125 / CFBP 8728 / NCIMB 11950 / KT2440).